Consider the following 762-residue polypeptide: Cellulose synthase-like protein H2 (762 aa).

Low complexity predominate over residues 1–15; it reads MAVVAAAAATGSTTR. The tract at residues 1-39 is disordered; that stretch reads MAVVAAAAATGSTTRSGGGGGEGTRSGRKKPPPPPLQER. The next 2 helical transmembrane spans lie at 47 to 67 and 81 to 101; these read AWAWRLAGLAVLLLLLALLAL and GVWRVALVCEAWFAALCALNV. Catalysis depends on residues aspartate 180 and aspartate 470. Transmembrane regions (helical) follow at residues 541 to 561, 582 to 602, 619 to 639, 673 to 693, 708 to 728, and 739 to 759; these read LAYLIVLGWPLRAPFELCYGL, FSVPLALFISYNTYNFMEYMA, IISVSAWTLAFLTVLLKSLGL, LPVFIPVTALAMLNIVAVTVG, APGIGEFMCCGWLVLCFFPFV, and GIPWSVKLKASLLVAMFVTFC.

The protein belongs to the glycosyltransferase 2 family. Plant cellulose synthase-like H subfamily.

The protein resides in the golgi apparatus membrane. Functionally, thought to be a Golgi-localized beta-glycan synthase that polymerize the backbones of noncellulosic polysaccharides (hemicelluloses) of plant cell wall. The sequence is that of Cellulose synthase-like protein H2 (CSLH2) from Oryza sativa subsp. japonica (Rice).